We begin with the raw amino-acid sequence, 1023 residues long: MAGNDCGALLDEELSSFFLNYLADTQGGGSGEEQLYADFPELDLSQLDASDFDSATCFGELQWCPENSETEPNQYSPDDSELFQIDSENEALLAELTKTLDDIPEDDVGLAAFPALDGGDALSCTSASPAPSSAPPSPAPEKPSAPAPEVDELSLLQKLLLATSYPTSSSDTQKEGTAWRQAGLRSKSQRPCVKADSTQDKKAPMMQSQSRSCTELHKHLTSAQCCLQDRGLQPPCLQSPRLPAKEDKEPGEDCPSPQPAPASPRDSLALGRADPGAPVSQEDMQAMVQLIRYMHTYCLPQRKLPPQTPEPLPKACSNPSQQVRSRPWSRHHSKASWAEFSILRELLAQDVLCDVSKPYRLATPVYASLTPRSRPRPPKDSQASPGRPSSVEEVRIAASPKSTGPRPSLRPLRLEVKREVRRPARLQQQEEEDEEEEEEEEEEEKEEEEEWGRKRPGRGLPWTKLGRKLESSVCPVRRSRRLNPELGPWLTFADEPLVPSEPQGALPSLCLAPKAYDVERELGSPTDEDSGQDQQLLRGPQIPALESPCESGCGDMDEDPSCPQLPPRDSPRCLMLALSQSDPTFGKKSFEQTLTVELCGTAGLTPPTTPPYKPTEEDPFKPDIKHSLGKEIALSLPSPEGLSLKATPGAAHKLPKKHPERSELLSHLRHATAQPASQAGQKRPFSCSFGDHDYCQVLRPEGVLQRKVLRSWEPSGVHLEDWPQQGAPWAEAQAPGREEDRSCDAGAPPKDSTLLRDHEIRASLTKHFGLLETALEEEDLASCKSPEYDTVFEDSSSSSGESSFLPEEEEEEGEEEEEDDEEEDSGVSPTCSDHCPYQSPPSKANRQLCSRSRSSSGSSPCHSWSPATRRNFRCESRGPCSDRTPSIRHARKRREKAIGEGRVVYIQNLSSDMSSRELKRRFEVFGEIEECEVLTRNRRGEKYGFITYRCSEHAALSLTKGAALRKRNEPSFQLSYGGLRHFCWPRYTDYDSNSEEALPASGKSKYEAMDFDSLLKEAQQSLH.

Residues M1 to A91 form an abolishes DNA transcriptional activity when missing region. Residues L122–P148 are disordered. Over residues S132 to P146 the composition is skewed to pro residues. Residues L156–L160 carry the LXXLL motif 1 motif. Disordered regions lie at residues Y165 to S210, L237 to P278, and R302 to H331. The LXXLL motif 2 motif lies at L343–L347. Disordered regions lie at residues L369–T463, R520–P567, T601–D623, and L636–R683. S384 is subject to Phosphoserine. Basic and acidic residues predominate over residues L412–R422. Residues Q429–E450 are compositionally biased toward acidic residues. Phosphoserine is present on S524. Over residues P614 to D623 the composition is skewed to basic and acidic residues. The residue at position 638 (S638) is a Phosphoserine. Residues D691 to Y694 carry the HCFC1-binding-motif (HBM) motif. Disordered regions lie at residues V717–H758 and D779–A867. Residues E793–L805 are compositionally biased toward low complexity. The segment covering P806 to S825 has biased composition (acidic residues). A compositionally biased stretch (low complexity) spans C849 to P866. In terms of domain architecture, RRM spans R902 to Y976.

As to quaternary structure, interacts with hepatocyte nuclear factor 4-alpha/HNF4A, Sterol regulatory binding transcription factor 1/SREBF1, PPAR-alpha/PPARA, thyroid hormone receptor beta/THRB and host cell factor/HCFC1. Interacts with estrogen-related receptor gamma/ESRRG and alpha/ESRRA. Interacts with PRDM16. Interacts with estrogen receptor alpha/ESR1. Ubiquitous with higher expression in heart, brain and skeletal muscle.

Its subcellular location is the nucleus. In terms of biological role, plays a role of stimulator of transcription factors and nuclear receptors activities. Activates transcriptional activity of estrogen receptor alpha, nuclear respiratory factor 1 (NRF1) and glucocorticoid receptor in the presence of glucocorticoids. May play a role in constitutive non-adrenergic-mediated mitochondrial biogenesis as suggested by increased basal oxygen consumption and mitochondrial number when overexpressed. May be involved in fat oxidation and non-oxidative glucose metabolism and in the regulation of energy expenditure. Induces the expression of PERM1 in the skeletal muscle in an ESRRA-dependent manner. The sequence is that of Peroxisome proliferator-activated receptor gamma coactivator 1-beta (PPARGC1B) from Homo sapiens (Human).